The chain runs to 416 residues: Ribulose bisphosphate carboxylase large chain (416 aa).

Positions 102 and 152 each coordinate substrate. Lys-154 (proton acceptor) is an active-site residue. Lys-156 contacts substrate. Residues Lys-180, Asp-182, and Glu-183 each contribute to the Mg(2+) site. Lys-180 is subject to N6-carboxylysine. The active-site Proton acceptor is the His-273. Residues Arg-274, His-306, and Ser-358 each contribute to the substrate site.

Belongs to the RuBisCO large chain family. Type I subfamily. As to quaternary structure, heterohexadecamer of 8 large chains and 8 small chains; disulfide-linked. The disulfide link is formed within the large subunit homodimers. It depends on Mg(2+) as a cofactor. The disulfide bond which can form in the large chain dimeric partners within the hexadecamer appears to be associated with oxidative stress and protein turnover.

It is found in the plastid. The protein localises to the chloroplast. It catalyses the reaction 2 (2R)-3-phosphoglycerate + 2 H(+) = D-ribulose 1,5-bisphosphate + CO2 + H2O. It carries out the reaction D-ribulose 1,5-bisphosphate + O2 = 2-phosphoglycolate + (2R)-3-phosphoglycerate + 2 H(+). RuBisCO catalyzes two reactions: the carboxylation of D-ribulose 1,5-bisphosphate, the primary event in carbon dioxide fixation, as well as the oxidative fragmentation of the pentose substrate in the photorespiration process. Both reactions occur simultaneously and in competition at the same active site. The chain is Ribulose bisphosphate carboxylase large chain (rbcL) from Arthropteris beckleri (Fern).